A 215-amino-acid chain; its full sequence is S-crystallin 2 (215 aa).

A GST N-terminal domain is found at 2–80; that stretch reads PSYTLNYFNH…YLAREFGFHG (79 aa). One can recognise a GST C-terminal domain in the interval 82 to 215; sequence NNMEMARVEY…YLKKRSSTEF (134 aa).

This sequence belongs to the GST superfamily. Lens.

S-crystallins are structural components of squids and octopi eye lens. Contains relatively little if any GST activity. The chain is S-crystallin 2 from Enteroctopus dofleini (North Pacific giant octopus).